The sequence spans 444 residues: N-succinylarginine dihydrolase (444 aa).

Substrate-binding positions include 19–28 (AGLSFGNVAS), Asn-110, and 137–138 (HR). Glu-174 is an active-site residue. A substrate-binding site is contributed by Arg-214. His-250 is a catalytic residue. Asp-252 and Asn-362 together coordinate substrate. The Nucleophile role is filled by Cys-368.

This sequence belongs to the succinylarginine dihydrolase family. In terms of assembly, homodimer.

It carries out the reaction N(2)-succinyl-L-arginine + 2 H2O + 2 H(+) = N(2)-succinyl-L-ornithine + 2 NH4(+) + CO2. It functions in the pathway amino-acid degradation; L-arginine degradation via AST pathway; L-glutamate and succinate from L-arginine: step 2/5. Catalyzes the hydrolysis of N(2)-succinylarginine into N(2)-succinylornithine, ammonia and CO(2). This is N-succinylarginine dihydrolase from Shewanella oneidensis (strain ATCC 700550 / JCM 31522 / CIP 106686 / LMG 19005 / NCIMB 14063 / MR-1).